The following is a 1546-amino-acid chain: Lysophospholipase NTE1 (1546 aa).

The Cytoplasmic portion of the chain corresponds to 1-45 (MKDSTEALNSIAFAVDTTLSSILPSSLAPPSAPPATSSFLKSIWY). A helical membrane pass occupies residues 46 to 66 (AFWWLWSMVVFKIMNIILLYI). The Lumenal portion of the chain corresponds to 67-81 (PSKIMNALSINFEIT). The chain crosses the membrane as a helical span at residues 82–102 (LNLSSILVALSAIITVCFLVV). At 103–1546 (RYKYLTGYSK…KKVLYRRNSI (1444 aa)) the chain is on the cytoplasmic side. A nucleoside 3',5'-cyclic phosphate is bound by residues 689 to 820 (PTEF…LKKL) and 816 to 965 (KLKK…VASK). The PNPLA domain occupies 1239 to 1403 (LVLGGGGSRG…LDNLPVSEMK (165 aa)). The GXGXXG signature appears at 1243–1248 (GGGSRG). The GXSXG signature appears at 1270-1274 (GTSIG). The Nucleophile role is filled by serine 1272. Aspartate 1390 (proton acceptor) is an active-site residue. Positions 1390–1392 (DGG) match the DGA/G motif.

It belongs to the NTE family.

The protein localises to the endoplasmic reticulum membrane. It catalyses the reaction a 1-acyl-sn-glycero-3-phosphocholine + H2O = sn-glycerol 3-phosphocholine + a fatty acid + H(+). Its activity is regulated as follows. Inhibited by organophosphorus esters. Functionally, intracellular phospholipase B that catalyzes the double deacylation of phosphatidylcholine (PC) to glycerophosphocholine (GroPCho). Plays an important role in membrane lipid homeostasis. Responsible for the rapid PC turnover in response to inositol, elevated temperatures, or when choline is present in the growth medium. This chain is Lysophospholipase NTE1 (NTE1), found in Scheffersomyces stipitis (strain ATCC 58785 / CBS 6054 / NBRC 10063 / NRRL Y-11545) (Yeast).